The chain runs to 67 residues: Lantibiotic Flvbeta.b (67 aa).

Positions 1 to 34 (MDNNTKLQKLYEQLAATGSEKELDAMLDENMAGA) are cleaved as a propeptide — cleaved by FlvT. S36 carries the post-translational modification 2,3-didehydroalanine (Ser); by FlvM2. 2,3-didehydrobutyrine; by FlvM2 occurs at positions 39 and 43. 3 cross-links (beta-methyllanthionine (Thr-Cys); by FlvM2) span residues 50–56 (TTGFDWC), 58–61 (TGAC), and 62–65 (TYSC).

Contains DL-beta-methyllanthionine, when coepressed in E.coli with the flavecin synthetase FlvM2.

It localises to the secreted. In terms of biological role, lanthionine-containing peptide antibiotic (lantibiotic) only active on Gram-positive bacteria in synergy with Flvalpha.a. Is not active in absence of Flvalpha.a, which is encoded by the same operon than Flvbeta.b. The bactericidal activity of lantibiotics is based on depolarization of energized bacterial cytoplasmic membranes, initiated by the formation of aqueous transmembrane pores. In Ruminococcus flavefaciens, this protein is Lantibiotic Flvbeta.b.